We begin with the raw amino-acid sequence, 263 residues long: Homeobox protein CDX-1 (263 aa).

A disordered region spans residues 47–108 (PGINSDPHHG…VQPPGSGLLP (62 aa)). Positions 82 to 97 (SSANPTQIAFSPSDYN) are enriched in polar residues. The homeobox DNA-binding region spans 150-209 (KDKYRVVYTDHQRLELEKEFHYSRYITIRRKAELAAALGLTERQVKIWFQNRRAKERKVN). The segment at 153–174 (YRVVYTDHQRLELEKEFHYSRY) is interaction with DNA. Residues 192–203 (RQVKIWFQNRRA) form an interaction with 5-mCpG DNA region. Residues 204–213 (KERKVNKKKM) show a composition bias toward basic residues. Residues 204-263 (KERKVNKKKMQQQSQQASTTTPTPPSVGTTAGMGGLCSSSSSNSNLVSPSSMPIKEEYLS) form a disordered region. 2 stretches are compositionally biased toward low complexity: residues 214–233 (QQQS…VGTT) and 241–254 (SSSS…SPSS).

This sequence belongs to the Caudal homeobox family.

It is found in the nucleus. Functionally, plays a role in transcriptional regulation. Involved in activated KRAS-mediated transcriptional activation of PRKD1. Binds to the PRKD1 promoter. Could play a role in the terminal differentiation of the intestine. Binds preferentially to methylated DNA. The sequence is that of Homeobox protein CDX-1 (cdx1) from Xenopus laevis (African clawed frog).